A 317-amino-acid polypeptide reads, in one-letter code: 17-beta-hydroxysteroid dehydrogenase type 6 (317 aa).

The signal sequence occupies residues 1 to 17 (MWFYLVTLVGLYHLLRW). Position 33-57 (33-57 (FITGCDSGFGNLLARQLDRRGMRVL)) interacts with NAD(+). N-linked (GlcNAc...) asparagine glycosylation is found at Asn-71 and Asn-161. Residue Ser-164 participates in substrate binding. The active-site Proton acceptor is Tyr-176.

This sequence belongs to the short-chain dehydrogenases/reductases (SDR) family. Detected in liver.

It localises to the microsome membrane. Its subcellular location is the early endosome membrane. It catalyses the reaction all-trans-retinol--[retinol-binding protein] + NAD(+) = all-trans-retinal--[retinol-binding protein] + NADH + H(+). The catalysed reaction is all-trans-retinol + NAD(+) = all-trans-retinal + NADH + H(+). The enzyme catalyses androsterone + NAD(+) = 5alpha-androstan-3,17-dione + NADH + H(+). It carries out the reaction testosterone + NAD(+) = androst-4-ene-3,17-dione + NADH + H(+). It catalyses the reaction 5alpha-androstane-3alpha,17beta-diol + NAD(+) = 17beta-hydroxy-5alpha-androstan-3-one + NADH + H(+). The catalysed reaction is 17beta-estradiol + NAD(+) = estrone + NADH + H(+). The enzyme catalyses 17beta-estradiol + NADP(+) = estrone + NADPH + H(+). It carries out the reaction 3alpha-hydroxy-5alpha-pregnan-20-one + NAD(+) = 5alpha-pregnane-3,20-dione + NADH + H(+). It catalyses the reaction 5alpha-androstane-3beta,17beta-diol + NAD(+) = 17beta-hydroxy-5alpha-androstan-3-one + NADH + H(+). The catalysed reaction is 3beta-hydroxy-5alpha-androstan-17-one + NAD(+) = 5alpha-androstan-3,17-dione + NADH + H(+). Its activity is regulated as follows. Inhibited by carbenoxolone and phenyl arsenoxide. Its function is as follows. NAD-dependent oxidoreductase with broad substrate specificity that shows both oxidative and reductive activity (in vitro). Has 17-beta-hydroxysteroid dehydrogenase activity towards various steroids (in vitro). Converts 5-alpha-androstan-3-alpha,17-beta-diol to androsterone and estradiol to estrone (in vitro). Has 3-alpha-hydroxysteroid dehydrogenase activity towards androsterone (in vitro). Has retinol dehydrogenase activity towards all-trans-retinol (in vitro). The protein is 17-beta-hydroxysteroid dehydrogenase type 6 (Hsd17b6) of Mus musculus (Mouse).